A 722-amino-acid polypeptide reads, in one-letter code: Serine/threonine-protein kinase dkf-1 (722 aa).

Phorbol-ester/DAG-type zinc fingers lie at residues 98-148 and 186-236; these read PHVV…RNNC and PHTL…ASNC. In terms of domain architecture, PH spans 279-407; the sequence is KKLEGWMMHF…QFIKESLQPP (129 aa). One can recognise a Protein kinase domain in the interval 426–685; sequence VLSDKTLGSG…IEQCLDHGWL (260 aa). Residues 432-440 and lysine 455 each bind ATP; that span reads LGSGQFGTV. The active-site Proton acceptor is aspartate 551. Threonine 588 is subject to Phosphothreonine.

It belongs to the protein kinase superfamily. CAMK Ser/Thr protein kinase family. PKD subfamily. Mg(2+) is required as a cofactor. In terms of processing, prolonged phosphorylation at Thr-588 results in ubiquitination and degradation. Highly expressed in embryos and at lower levels through the four larval stages in adults. Present in a region bounded by the anterior and posterior bulbs of the pharynx and an area of the tail containing the lumbar, dorsorectal and pre-anal ganglia. Expressed in neurons.

The protein resides in the cytoplasm. It localises to the membrane. It carries out the reaction L-seryl-[protein] + ATP = O-phospho-L-seryl-[protein] + ADP + H(+). The enzyme catalyses L-threonyl-[protein] + ATP = O-phospho-L-threonyl-[protein] + ADP + H(+). With respect to regulation, activated by DAG and phorbol esters. Phorbol-ester/DAG-type domain 1 binds phorbol ester with high affinity and mediates accumulation at the cell periphery. Phorbol-ester/DAG-type domain 2 binds phorbol ester with low affinity but may mediate initial contact, resulting in a conformational change allowing previously occluded domain 1 to anchor the kinase. Phosphorylation on Thr-588 is then also required for activation and may also result in a further conformational change. Functionally, converts transient diacylglycerol (DAG) signals into prolonged physiological effects, independently of PKC. Role in the regulation of growth and neuromuscular control of movement. Involved in immune response to S.aureus bacterium by activating transcription factor hlh-30 downstream of phospholipase plc-1. The protein is Serine/threonine-protein kinase dkf-1 (dkf-1) of Caenorhabditis elegans.